Here is a 204-residue protein sequence, read N- to C-terminus: Dihydroorotase (204 aa).

Zn(2+) is bound at residue His-34. Leu-79 contributes to the substrate binding site. Residue Asp-107 coordinates Zn(2+). Asp-107 is an active-site residue. 2 residues coordinate substrate: His-111 and Ala-123.

This sequence belongs to the metallo-dependent hydrolases superfamily. DHOase family. Class II DHOase subfamily. As to quaternary structure, homodimer. Requires Zn(2+) as cofactor.

It carries out the reaction (S)-dihydroorotate + H2O = N-carbamoyl-L-aspartate + H(+). It functions in the pathway pyrimidine metabolism; UMP biosynthesis via de novo pathway; (S)-dihydroorotate from bicarbonate: step 3/3. Catalyzes the reversible cyclization of carbamoyl aspartate to dihydroorotate. This Serratia marcescens protein is Dihydroorotase.